A 338-amino-acid polypeptide reads, in one-letter code: Ketol-acid reductoisomerase (NADP(+)) (338 aa).

Residues 1–181 (MKVFYDKDCD…GGGRTGIIET (181 aa)) form the KARI N-terminal Rossmann domain. NADP(+)-binding positions include 24–27 (YGSQ), Arg-47, Ser-50, Thr-52, and 82–85 (DEFQ). The active site involves His-107. Gly-133 serves as a coordination point for NADP(+). Residues 182 to 327 (TFKDETETDL…EQLRSMMPWI (146 aa)) enclose the KARI C-terminal knotted domain. Mg(2+) is bound by residues Asp-190, Glu-194, Glu-226, and Glu-230. Ser-251 lines the substrate pocket.

It belongs to the ketol-acid reductoisomerase family. Requires Mg(2+) as cofactor.

It catalyses the reaction (2R)-2,3-dihydroxy-3-methylbutanoate + NADP(+) = (2S)-2-acetolactate + NADPH + H(+). It carries out the reaction (2R,3R)-2,3-dihydroxy-3-methylpentanoate + NADP(+) = (S)-2-ethyl-2-hydroxy-3-oxobutanoate + NADPH + H(+). It functions in the pathway amino-acid biosynthesis; L-isoleucine biosynthesis; L-isoleucine from 2-oxobutanoate: step 2/4. The protein operates within amino-acid biosynthesis; L-valine biosynthesis; L-valine from pyruvate: step 2/4. Functionally, involved in the biosynthesis of branched-chain amino acids (BCAA). Catalyzes an alkyl-migration followed by a ketol-acid reduction of (S)-2-acetolactate (S2AL) to yield (R)-2,3-dihydroxy-isovalerate. In the isomerase reaction, S2AL is rearranged via a Mg-dependent methyl migration to produce 3-hydroxy-3-methyl-2-ketobutyrate (HMKB). In the reductase reaction, this 2-ketoacid undergoes a metal-dependent reduction by NADPH to yield (R)-2,3-dihydroxy-isovalerate. In Pseudomonas fluorescens (strain ATCC BAA-477 / NRRL B-23932 / Pf-5), this protein is Ketol-acid reductoisomerase (NADP(+)).